The following is a 347-amino-acid chain: Cytoplasmic tRNA 2-thiolation protein 1 (347 aa).

A Phosphoserine modification is found at Ser200. Residues 315–347 form a disordered region; the sequence is LAIGKGRRGLDEEGPPREPQPSRPLTSEPVPDF.

It belongs to the TtcA family. CTU1/NCS6/ATPBD3 subfamily. As to quaternary structure, component of a complex at least composed of URM1, CTU2/NCS2 and CTU1/ATPBD3. May form a heterodimer with CTU2/NCS2.

It localises to the cytoplasm. Its pathway is tRNA modification; 5-methoxycarbonylmethyl-2-thiouridine-tRNA biosynthesis. Plays a central role in 2-thiolation of mcm(5)S(2)U at tRNA wobble positions of tRNA(Lys), tRNA(Glu) and tRNA(Gln). Directly binds tRNAs and probably acts by catalyzing adenylation of tRNAs, an intermediate required for 2-thiolation. It is unclear whether it acts as a sulfurtransferase that transfers sulfur from thiocarboxylated URM1 onto the uridine of tRNAs at wobble position. The protein is Cytoplasmic tRNA 2-thiolation protein 1 of Bos taurus (Bovine).